The following is a 198-amino-acid chain: NAD(P)H dehydrogenase (quinone) (198 aa).

The Flavodoxin-like domain maps to 4–189 (ILVLYYSMYG…SIARYQGEYV (186 aa)). FMN-binding positions include 10–15 (SMYGHI) and 78–80 (TRF). Tyr-12 is an NAD(+) binding site. Trp-98 contacts substrate. FMN contacts are provided by residues 113–118 (STGTGG) and His-133.

The protein belongs to the WrbA family. FMN is required as a cofactor.

The enzyme catalyses a quinone + NADH + H(+) = a quinol + NAD(+). It carries out the reaction a quinone + NADPH + H(+) = a quinol + NADP(+). This Citrobacter koseri (strain ATCC BAA-895 / CDC 4225-83 / SGSC4696) protein is NAD(P)H dehydrogenase (quinone).